The primary structure comprises 546 residues: Tyrosine-protein kinase yes (546 aa).

Basic and acidic residues predominate over residues Met-1–Pro-18. The segment at Met-1–Gly-58 is disordered. The N-myristoyl glycine moiety is linked to residue Gly-2. Cys-3 is lipidated: S-palmitoyl cysteine; in membrane form. Residues Pro-48–Gly-58 are compositionally biased toward polar residues. The region spanning Gly-94–Ser-155 is the SH3 domain. In terms of domain architecture, SH2 spans Trp-161–Cys-258. The 254-residue stretch at Leu-280–Phe-533 folds into the Protein kinase domain. ATP-binding positions include Leu-286–Val-294 and Lys-308. Asp-399 serves as the catalytic Proton acceptor. Tyr-429 bears the Phosphotyrosine; by autocatalysis mark. Tyr-540 carries the phosphotyrosine; by CSK modification.

Belongs to the protein kinase superfamily. Tyr protein kinase family. SRC subfamily. Post-translationally, autophosphorylation at Tyr-429 maintains enzyme activity. Palmitoylation at Cys-3 promotes membrane localization. Widely expressed.

The protein localises to the cell membrane. Its subcellular location is the cytoplasm. It localises to the cytoskeleton. It is found in the microtubule organizing center. The protein resides in the centrosome. The protein localises to the cytosol. Its subcellular location is the cell junction. It catalyses the reaction L-tyrosyl-[protein] + ATP = O-phospho-L-tyrosyl-[protein] + ADP + H(+). Its function is as follows. Non-receptor protein tyrosine kinase that is involved in the regulation of cell growth and survival, apoptosis, cell-cell adhesion, cytoskeleton remodeling, differentiation, G2/M progression and cytokinesis. Required for convergent extension cell movements during gastrulation, acting with fyna via rhoa. May be required for epiboly to occur, possibly through its effects in calcium signaling. During embryonic development, phosphorylates ptk2.1/fak. This Danio rerio (Zebrafish) protein is Tyrosine-protein kinase yes (yes1).